A 184-amino-acid polypeptide reads, in one-letter code: UPF0149 protein PputGB1_5261 (184 aa).

Belongs to the UPF0149 family.

This chain is UPF0149 protein PputGB1_5261, found in Pseudomonas putida (strain GB-1).